We begin with the raw amino-acid sequence, 1497 residues long: DNA-directed RNA polymerase subunit beta (1497 aa).

The protein belongs to the RNA polymerase beta chain family. In terms of assembly, the RNAP catalytic core consists of 2 alpha, 1 beta, 1 beta' and 1 omega subunit. When a sigma factor is associated with the core the holoenzyme is formed, which can initiate transcription.

It carries out the reaction RNA(n) + a ribonucleoside 5'-triphosphate = RNA(n+1) + diphosphate. DNA-dependent RNA polymerase catalyzes the transcription of DNA into RNA using the four ribonucleoside triphosphates as substrates. This Trichlorobacter lovleyi (strain ATCC BAA-1151 / DSM 17278 / SZ) (Geobacter lovleyi) protein is DNA-directed RNA polymerase subunit beta.